The sequence spans 93 residues: Protein salt-induced and EIN3/EIL1-dependent 1 (93 aa).

A compositionally biased stretch (low complexity) spans 23 to 36; the sequence is SSLLTESSSSSLCS. The interval 23–46 is disordered; that stretch reads SSLLTESSSSSLCSEEAEGGGGEA.

Triggered by EIN3. Its function is as follows. Involved in ethylene-dependent salt stress responses by reducing reactive oxygen species (ROS) accumulation. The sequence is that of Protein salt-induced and EIN3/EIL1-dependent 1 from Arabidopsis thaliana (Mouse-ear cress).